The sequence spans 205 residues: High frequency lysogenization protein HflD homolog (205 aa).

It belongs to the HflD family.

It is found in the cytoplasm. Its subcellular location is the cell inner membrane. This is High frequency lysogenization protein HflD homolog from Shewanella sp. (strain ANA-3).